Consider the following 795-residue polypeptide: Inactive N-acetylated-alpha-linked acidic dipeptidase-like protein 2 (795 aa).

The segment at 1 to 38 (MGENEASLPNTSLQGKKMAYQKVHADQRAPGHSQYLDN) is disordered. The Cytoplasmic segment spans residues 1–121 (MGENEASLPN…RSAPKSNRCN (121 aa)). Residue serine 92 is modified to Phosphoserine. Residues 122–142 (FCHVLKILCTATILFIFGILI) traverse the membrane as a helical; Signal-anchor for type II membrane protein segment. Residues 143–795 (GYYVHTNCPS…VFKSVLDGKN (653 aa)) are Extracellular-facing. 4 N-linked (GlcNAc...) asparagine glycosylation sites follow: asparagine 295, asparagine 373, asparagine 534, and asparagine 759.

Belongs to the peptidase M28 family. M28B subfamily. As to expression, expressed at higher level in kidney and placenta. In embryo, it is mainly confined to duodenal and stomach endoderm, mesonephros, metanephros and pancreas.

The protein resides in the membrane. May be catalytically inactive. The polypeptide is Inactive N-acetylated-alpha-linked acidic dipeptidase-like protein 2 (NAALADL2) (Homo sapiens (Human)).